Consider the following 211-residue polypeptide: Phosphoheptose isomerase (211 aa).

Positions 50 to 211 constitute an SIS domain; it reads IAGTFEDGGK…VERMLGYCRL (162 aa). 65–67 lines the substrate pocket; sequence NGG. Zn(2+)-binding residues include His-74 and Glu-78. Substrate-binding positions include Glu-78, 109–110, 135–137, Ser-140, and Gln-188; these read ND and STS. Gln-188 and His-196 together coordinate Zn(2+).

It belongs to the SIS family. GmhA subfamily. Zn(2+) serves as cofactor.

The protein localises to the cytoplasm. The enzyme catalyses 2 D-sedoheptulose 7-phosphate = D-glycero-alpha-D-manno-heptose 7-phosphate + D-glycero-beta-D-manno-heptose 7-phosphate. It participates in carbohydrate biosynthesis; D-glycero-D-manno-heptose 7-phosphate biosynthesis; D-glycero-alpha-D-manno-heptose 7-phosphate and D-glycero-beta-D-manno-heptose 7-phosphate from sedoheptulose 7-phosphate: step 1/1. Functionally, catalyzes the isomerization of sedoheptulose 7-phosphate in D-glycero-D-manno-heptose 7-phosphate. The protein is Phosphoheptose isomerase of Pelodictyon phaeoclathratiforme (strain DSM 5477 / BU-1).